Reading from the N-terminus, the 154-residue chain is Ribonuclease H (154 aa).

In terms of domain architecture, RNase H type-1 spans 1–142 (MRKQVEIFTD…CDELARAAAS (142 aa)). Residues Asp10, Glu48, Asp70, and Asp134 each coordinate Mg(2+).

This sequence belongs to the RNase H family. Monomer. Mg(2+) is required as a cofactor.

The protein localises to the cytoplasm. The enzyme catalyses Endonucleolytic cleavage to 5'-phosphomonoester.. Its function is as follows. Endonuclease that specifically degrades the RNA of RNA-DNA hybrids. The polypeptide is Ribonuclease H (Pectobacterium atrosepticum (strain SCRI 1043 / ATCC BAA-672) (Erwinia carotovora subsp. atroseptica)).